The following is a 359-amino-acid chain: Outer membrane protein A (359 aa).

The first 21 residues, Met1 to Ala21, serve as a signal peptide directing secretion. Transmembrane regions (beta stranded) follow at residues Thr27–Ser37, Gln62–Ala73, Leu77–Trp85, Gln103–Pro114, Leu119–Gly127, Pro154–Ala163, Trp168–Gln175, and Met194–Arg202. 5 tandem repeats follow at residues Ala210 to Pro211, Ala212 to Pro213, Ala214 to Pro215, Ala216 to Pro217, and Ala218 to Pro219. The 5 X 2 AA tandem repeats of A-P stretch occupies residues Ala210–Pro219. In terms of domain architecture, OmpA-like spans Val221–Lys351. Cysteines 322 and 336 form a disulfide.

The protein belongs to the outer membrane OOP (TC 1.B.6) superfamily. OmpA family. As to quaternary structure, monomer and homodimer.

It is found in the cell outer membrane. Its function is as follows. With TolR probably plays a role in maintaining the position of the peptidoglycan cell wall in the periplasm. Acts as a porin with low permeability that allows slow penetration of small solutes; an internal gate slows down solute passage. In Serratia marcescens, this protein is Outer membrane protein A.